Here is a 172-residue protein sequence, read N- to C-terminus: 3-hydroxydecanoyl-[acyl-carrier-protein] dehydratase (172 aa).

His-71 is an active-site residue.

The protein belongs to the thioester dehydratase family. FabA subfamily. As to quaternary structure, homodimer.

The protein resides in the cytoplasm. It carries out the reaction a (3R)-hydroxyacyl-[ACP] = a (2E)-enoyl-[ACP] + H2O. It catalyses the reaction (3R)-hydroxydecanoyl-[ACP] = (2E)-decenoyl-[ACP] + H2O. The catalysed reaction is (2E)-decenoyl-[ACP] = (3Z)-decenoyl-[ACP]. The protein operates within lipid metabolism; fatty acid biosynthesis. In terms of biological role, necessary for the introduction of cis unsaturation into fatty acids. Catalyzes the dehydration of (3R)-3-hydroxydecanoyl-ACP to E-(2)-decenoyl-ACP and then its isomerization to Z-(3)-decenoyl-ACP. Can catalyze the dehydratase reaction for beta-hydroxyacyl-ACPs with saturated chain lengths up to 16:0, being most active on intermediate chain length. The polypeptide is 3-hydroxydecanoyl-[acyl-carrier-protein] dehydratase (Salmonella arizonae (strain ATCC BAA-731 / CDC346-86 / RSK2980)).